The sequence spans 674 residues: Forkhead box protein P1 (674 aa).

The span at M1–G19 shows a compositional bias: polar residues. The interval M1–V44 is disordered. S82 is modified (phosphoserine). Positions M269–V281 are enriched in polar residues. The disordered stretch occupies residues M269–H296. The span at P284 to H296 shows a compositional bias: basic and acidic residues. A Glycyl lysine isopeptide (Lys-Gly) (interchain with G-Cter in SUMO2) cross-link involves residue K285. The segment at G304–H329 adopts a C2H2-type zinc-finger fold. A leucine-zipper region spans residues V346–L367. Glycyl lysine isopeptide (Lys-Gly) (interchain with G-Cter in SUMO2) cross-links involve residues K370 and K375. A CTBP1-binding region spans residues P380–V384. Over residues T388–L401 the composition is skewed to polar residues. The disordered stretch occupies residues T388–M427. Positions P402–P419 are enriched in low complexity. Residue K440 forms a Glycyl lysine isopeptide (Lys-Gly) (interchain with G-Cter in SUMO2) linkage. Residues R462–L552 constitute a DNA-binding region (fork-head). Residues E608–E674 are disordered. Residues H609–G620 show a composition bias toward polar residues. Position 650 is a phosphothreonine (T650). S655 bears the Phosphoserine mark. Over residues Y664 to E674 the composition is skewed to acidic residues.

As to quaternary structure, forms homodimers and heterodimers with FOXP2 and FOXP4. Dimerization is required for DNA-binding. Self-associates. Interacts with CTBP1. Interacts with NCOR2 and AR. Interacts with FOXP2. Interacts with TBR1. Interacts with AURKA; this interaction facilitates the phosphorylation of FOXP1, which suppresses the expression of FBXL7. Interacts with ZMYM2.

Its subcellular location is the nucleus. Functionally, transcriptional repressor. Can act with CTBP1 to synergistically repress transcription but CTPBP1 is not essential. Plays an important role in the specification and differentiation of lung epithelium. Acts cooperatively with FOXP4 to regulate lung secretory epithelial cell fate and regeneration by restricting the goblet cell lineage program; the function may involve regulation of AGR2. Essential transcriptional regulator of B-cell development. Involved in regulation of cardiac muscle cell proliferation. Involved in the columnar organization of spinal motor neurons. Promotes the formation of the lateral motor neuron column (LMC) and the preganglionic motor column (PGC) and is required for respective appropriate motor axon projections. The segment-appropriate generation of spinal cord motor columns requires cooperation with other Hox proteins. Can regulate PITX3 promoter activity; may promote midbrain identity in embryonic stem cell-derived dopamine neurons by regulating PITX3. Negatively regulates the differentiation of T follicular helper cells T(FH)s. Involved in maintenance of hair follicle stem cell quiescence; the function probably involves regulation of FGF18. Represses transcription of various pro-apoptotic genes and cooperates with NF-kappa B-signaling in promoting B-cell expansion by inhibition of caspase-dependent apoptosis. Binds to CSF1R promoter elements and is involved in regulation of monocyte differentiation and macrophage functions; repression of CSF1R in monocytes seems to involve NCOR2 as corepressor. Involved in endothelial cell proliferation, tube formation and migration indicative for a role in angiogenesis; the role in neovascularization seems to implicate suppression of SEMA5B. Can negatively regulate androgen receptor signaling. Acts as a transcriptional activator of the FBXL7 promoter; this activity is regulated by AURKA. In Bos taurus (Bovine), this protein is Forkhead box protein P1 (FOXP1).